The primary structure comprises 1019 residues: Phosphatidylinositol 3,4,5-trisphosphate 5-phosphatase 1 (1019 aa).

An SH2 domain is found at tryptophan 5 to isoleucine 101. Over residues lysine 103–glutamate 116 the composition is skewed to acidic residues. Disordered stretches follow at residues lysine 103 to serine 133 and glutamate 909 to alanine 1019. The short motif at proline 120–arginine 125 is the SH3-binding 1 element. Polar residues-rich tracts occupy residues glutamate 909–proline 931 and proline 958–threonine 980. Residues threonine 966–lysine 971 carry the SH3-binding 2 motif. An NPXY motif motif is present at residues asparagine 1004–tyrosine 1007. Tyrosine 1007 carries the post-translational modification Phosphotyrosine. Positions valine 1010–alanine 1019 are enriched in polar residues.

It belongs to the inositol 1,4,5-trisphosphate 5-phosphatase family. In terms of processing, tyrosine phosphorylated by the members of the SRC family after exposure to a diverse array of extracellular stimuli.

It localises to the cytoplasm. The protein localises to the cell membrane. Its subcellular location is the membrane raft. The protein resides in the cytoskeleton. The catalysed reaction is a 1,2-diacyl-sn-glycero-3-phospho-(1D-myo-inositol-3,4,5-trisphosphate) + H2O = a 1,2-diacyl-sn-glycero-3-phospho-(1D-myo-inositol-3,4-bisphosphate) + phosphate. The enzyme catalyses 1D-myo-inositol 1,3,4,5-tetrakisphosphate + H2O = 1D-myo-inositol 1,3,4-trisphosphate + phosphate. It catalyses the reaction a 1,2-diacyl-sn-glycero-3-phospho-(1D-myo-inositol-4,5-bisphosphate) + H2O = a 1,2-diacyl-sn-glycero-3-phospho-(1D-myo-inositol 4-phosphate) + phosphate. Its function is as follows. Phosphatidylinositol (PtdIns) phosphatase that specifically hydrolyzes the 5-phosphate of phosphatidylinositol-3,4,5-trisphosphate (PtdIns(3,4,5)P3) to produce PtdIns(3,4)P2, thereby negatively regulating the PI3K (phosphoinositide 3-kinase) pathways. Able also to hydrolyzes the 5-phosphate of phosphatidylinositol-4,5-bisphosphate (PtdIns(4,5)P3) and inositol 1,3,4,5-tetrakisphosphate. Acts as a negative regulator of B-cell antigen receptor signaling. Mediates signaling from the FC-gamma-RIIB receptor (FCGR2B), playing a central role in terminating signal transduction from activating immune/hematopoietic cell receptor systems. Acts as a negative regulator of myeloid cell proliferation/survival and chemotaxis, mast cell degranulation, immune cells homeostasis, integrin alpha-IIb/beta-3 signaling in platelets and JNK signaling in B-cells. The protein is Phosphatidylinositol 3,4,5-trisphosphate 5-phosphatase 1 (inpp5d) of Xenopus laevis (African clawed frog).